The chain runs to 152 residues: Acyl carrier protein, mitochondrial (152 aa).

Residues 73–148 (KLINERVLLV…DIIKYVADKE (76 aa)) form the Carrier domain. Ser108 bears the O-(pantetheine 4'-phosphoryl)serine mark.

It belongs to the acyl carrier protein (ACP) family. In terms of assembly, complex I is composed of about 45 different subunits.

The protein resides in the mitochondrion. Its function is as follows. Carrier of the growing fatty acid chain in fatty acid biosynthesis. Accessory and non-catalytic subunit of the mitochondrial membrane respiratory chain NADH dehydrogenase (Complex I), which functions in the transfer of electrons from NADH to the respiratory chain. The sequence is that of Acyl carrier protein, mitochondrial from Drosophila melanogaster (Fruit fly).